We begin with the raw amino-acid sequence, 1100 residues long: Beta-alanine-activating enzyme (1100 aa).

The interval 162–181 (HKVTDREDRVSAESRTPEKE) is disordered. ATP contacts are provided by residues 197–205 (TSGTTGTPK), aspartate 427, arginine 441, and lysine 526. Residues 552-632 (EELWGKLQYL…DVYNHIVQAV (81 aa)) enclose the Carrier domain. Serine 591 bears the O-(pantetheine 4'-phosphoryl)serine mark. A disordered region spans residues 643–671 (SYTTKRKFSDADPEEASGKPARLESAWPS). Phosphoserine is present on serine 651.

It belongs to the ATP-dependent AMP-binding enzyme family.

Its function is as follows. Covalently binds beta-alanine in an ATP-dependent manner to form a thioester bond with its phosphopantetheine group and transfers it to an as yet unknown acceptor via an amide bond. May be required for a post-translational protein modification or for post-transcriptional modification of an RNA. The chain is Beta-alanine-activating enzyme (Aasdh) from Mus musculus (Mouse).